The following is a 189-amino-acid chain: Peptidyl-tRNA hydrolase (189 aa).

Tyr-15 contacts tRNA. Catalysis depends on His-20, which acts as the Proton acceptor. Positions 65, 67, and 113 each coordinate tRNA.

The protein belongs to the PTH family. In terms of assembly, monomer.

Its subcellular location is the cytoplasm. The catalysed reaction is an N-acyl-L-alpha-aminoacyl-tRNA + H2O = an N-acyl-L-amino acid + a tRNA + H(+). Hydrolyzes ribosome-free peptidyl-tRNAs (with 1 or more amino acids incorporated), which drop off the ribosome during protein synthesis, or as a result of ribosome stalling. Functionally, catalyzes the release of premature peptidyl moieties from peptidyl-tRNA molecules trapped in stalled 50S ribosomal subunits, and thus maintains levels of free tRNAs and 50S ribosomes. This is Peptidyl-tRNA hydrolase from Caldicellulosiruptor bescii (strain ATCC BAA-1888 / DSM 6725 / KCTC 15123 / Z-1320) (Anaerocellum thermophilum).